The chain runs to 505 residues: Proton-coupled zinc antiporter SLC30A1 (505 aa).

Residues methionine 1–arginine 10 are Cytoplasmic-facing. The helical transmembrane segment at leucine 11–valine 31 threads the bilayer. At threonine 32 to leucine 35 the chain is on the extracellular side. The helical transmembrane segment at alanine 36–valine 56 threads the bilayer. Positions 43 and 47 each coordinate Zn(2+). The Cytoplasmic segment spans residues alanine 57–methionine 80. A helical transmembrane segment spans residues glycine 81–isoleucine 101. Residues glutamate 102–proline 113 lie on the Extracellular side of the membrane. The chain crosses the membrane as a helical span at residues leucine 114 to phenylalanine 134. Over histidine 135–valine 246 the chain is Cytoplasmic. The interval glutamine 142–threonine 215 is disordered. The span at threonine 187–glycine 199 shows a compositional bias: polar residues. Positions aspartate 203 to aspartate 214 are enriched in basic and acidic residues. The chain crosses the membrane as a helical span at residues phenylalanine 247–phenylalanine 267. Histidine 249 and aspartate 253 together coordinate Zn(2+). Residues tyrosine 268–alanine 306 are Extracellular-facing. Asparagine 297 is a glycosylation site (N-linked (GlcNAc...) asparagine). A helical transmembrane segment spans residues glycine 307–leucine 327. Over tyrosine 328–leucine 505 the chain is Cytoplasmic. Serine 504 carries the post-translational modification Phosphoserine.

This sequence belongs to the cation diffusion facilitator (CDF) transporter (TC 2.A.4) family. SLC30A subfamily. As to quaternary structure, homodimer. Interacts with TMEM163. Interacts and forms a complex with TMC6 and TMC8; the interaction regulates zinc transport into the ER.

It localises to the cell membrane. The protein localises to the basolateral cell membrane. It is found in the cytoplasmic vesicle membrane. The protein resides in the cytoplasm. Its subcellular location is the endoplasmic reticulum membrane. It localises to the golgi apparatus membrane. The protein localises to the nucleus membrane. It catalyses the reaction Zn(2+)(in) + 2 H(+)(out) = Zn(2+)(out) + 2 H(+)(in). Its function is as follows. Zinc ion:proton antiporter that could function at the plasma membrane mediating zinc efflux from cells against its electrochemical gradient protecting them from intracellular zinc accumulation and toxicity. Alternatively, could prevent the transport to the plasma membrane of CACNB2, the L-type calcium channels regulatory subunit, through a yet to be defined mechanism. By modulating the expression of these channels at the plasma membrane, could prevent calcium and zinc influx into cells. By the same mechanism, could also prevent L-type calcium channels-mediated heavy metal influx into cells. In some cells, could also function as a zinc ion:proton antiporter mediating zinc entry into the lumen of cytoplasmic vesicles. In macrophages, can increase zinc ions concentration into the lumen of cytoplasmic vesicles containing engulfed bacteria and could help inactivate them. Forms a complex with TMC6/EVER1 and TMC8/EVER2 at the ER membrane of keratynocytes which facilitates zinc uptake into the ER. Down-regulates the activity of transcription factors induced by zinc and cytokines. This is Proton-coupled zinc antiporter SLC30A1 from Macaca fascicularis (Crab-eating macaque).